The primary structure comprises 1447 residues: ATP-dependent helicase SGS1 (1447 aa).

5 disordered regions span residues 37–78, 243–264, 342–430, 552–572, and 601–639; these read IANK…TATK, KKDG…QDDN, KEGA…EEKE, KENE…LSDS, and TERK…FDDD. Positions 59 to 78 are enriched in polar residues; that stretch reads GTTNFITSIPASGPTNTATK. Residues 243–253 show a composition bias toward basic and acidic residues; the sequence is KKDGMSKDQSK. A compositionally biased stretch (polar residues) spans 254–264; sequence GRSQVSSQDDN. Residues 363–386 show a composition bias toward basic and acidic residues; that stretch reads ELTRRRNMRSREPVNYRIPDRDDP. Composition is skewed to acidic residues over residues 403–415 and 552–561; these read EREE…EAED and KENEDFEEDN. Residues 601–611 are compositionally biased toward basic and acidic residues; sequence TERKLTGDNEH. In terms of domain architecture, Helicase ATP-binding spans 687–864; the sequence is VNATLQGKDV…IHNLELKEPV (178 aa). Position 714–721 (714–721) interacts with ATP; sequence AVVKSGKT. Positions 808–811 match the DEAH box motif; that stretch reads DEAH. Residues 886 to 1035 enclose the Helicase C-terminal domain; that stretch reads TIFEICDAVK…NKEKHLNKLQ (150 aa). An HRDC domain is found at 1272–1351; that stretch reads LNNLRMTYER…ADLSKKRSSE (80 aa). Residues 1402–1411 are compositionally biased toward polar residues; the sequence is QIRQSQLPKN. Residues 1402–1447 form a disordered region; the sequence is QIRQSQLPKNTTSSKSGTRSISKSSKKSANGRRGFRNYRGHYRGRK. Low complexity predominate over residues 1412–1424; that stretch reads TTSSKSGTRSISK. A compositionally biased stretch (basic residues) spans 1425–1447; sequence SSKKSANGRRGFRNYRGHYRGRK.

Belongs to the helicase family. RecQ subfamily. In terms of assembly, heterodimer with TOP3. Forms a complex with TOP3 and RMI1. Forms a ternary complex with a MLH1-MLH3 heterodimer (MutLbeta) during meiosis. Interacts with TOP2. It depends on Mg(2+) as a cofactor.

It localises to the nucleus. It is found in the nucleolus. It carries out the reaction Couples ATP hydrolysis with the unwinding of duplex DNA by translocating in the 3'-5' direction.. It catalyses the reaction ATP + H2O = ADP + phosphate + H(+). Its activity is regulated as follows. Helicase activity on G-quadruplex DNA is inhibited by ATP-gamma-S. In terms of biological role, ATP-dependent 3'-5' DNA helicase able to unwind duplex DNA or DNA:RNA heteroduplex. Unwinds G-quadruplex DNA; unwinding occurs in the 3'-5' direction, requires a 3' single-stranded end of at least 7 nucleotides. Helicase activity is higher on G-quadruplex substrates than on duplex DNA substrates. Assayed with a catalytic fragment (residues 400-1268). Telomeres and rDNA are notably G-rich; formation of G-quadruplex DNA would block DNA replication and transcription. Acts as an integral component of the S-phase checkpoint response, which arrests cells due to DNA damage or blocked fork progression during DNA replication. Can create a deleterious topological substrate that TOP3 preferentially resolves. The TOP3-SGS1 protein complex may function as a eukaryotic reverse gyrase introducing positive supercoils into extrachromosomal ribosomal DNA rings. Together with topoisomerase II has a role in chromosomal segregation. Maintains rDNA structure where it has a role in re-starting stalled replication forks. This chain is ATP-dependent helicase SGS1, found in Saccharomyces cerevisiae (strain ATCC 204508 / S288c) (Baker's yeast).